Here is a 326-residue protein sequence, read N- to C-terminus: Zinc finger CCCH domain-containing protein 15 (326 aa).

Gly residues predominate over residues 1-14 (MADGGGGGEAGSGG). The tract at residues 1-142 (MADGGGGGEA…SSSGSGSGEV (142 aa)) is disordered. Residues 24–33 (KPPKNIRKRP) are compositionally biased toward basic residues. The span at 47–64 (SGAIAAARAKKAPSSTSK) shows a compositional bias: low complexity. A compositionally biased stretch (polar residues) spans 81 to 100 (YESSRTIQASTDSRATATLE). Residues 104-125 (EFDRDARAIRERQLKQAEESLK) show a composition bias toward basic and acidic residues. Residues 187–215 (DYQPDICKDYKETGYCGYGDSCKFMHDRG) form a C3H1-type zinc finger. An RING-type zinc finger spans residues 265–303 (CYICREPFVDPVVTKCKHYFCEHCALKHHSKNKKCFVCN).

This chain is Zinc finger CCCH domain-containing protein 15, found in Oryza sativa subsp. japonica (Rice).